The sequence spans 314 residues: Zinc transporter ZIP3 (314 aa).

Residues 1-3 are Extracellular-facing; the sequence is MNL. The chain crosses the membrane as a helical span at residues 4–24; it reads IFAKVLCLLAILVLMMLGSLI. At 25-41 the chain is on the cytoplasmic side; sequence PVKISEADFDKSSRSRK. Residues 42–62 traverse the membrane as a helical segment; the sequence is ILSLSNSFAGGVFLATCFNAL. Residues 63–84 lie on the Extracellular side of the membrane; it reads LPAVREKFFDLLKIGNISTDYP. A helical membrane pass occupies residues 85 to 105; that stretch reads LAETIMMVGFFLTVFVEQTVM. The Cytoplasmic segment spans residues 106–169; sequence TFRKEKPSFI…KELSSSSPIR (64 aa). The helical transmembrane segment at 170-190 threads the bilayer; that stretch reads LFSLVFALSAHSVFEGLALGL. Over 191 to 196 the chain is Extracellular; it reads QEDGNK. Residues 197–217 traverse the membrane as a helical segment; it reads LLSLFIGVVIHETLVAMALGV. The Cytoplasmic portion of the chain corresponds to 218-229; it reads SMAKVNTHLKDA. A helical membrane pass occupies residues 230-250; the sequence is IKMAVLVSTMIPIGIVVGMAI. The Extracellular portion of the chain corresponds to 251-262; the sequence is QSAQNMASSIAS. The chain crosses the membrane as a helical span at residues 263–283; sequence ALLQGIAGGTFIFVTFFEILV. Residues 284–292 are Cytoplasmic-facing; it reads KELEEKNDR. A helical membrane pass occupies residues 293–313; it reads LLKVLFLVLGYTVLAVLVLFK. Position 314 (tryptophan 314) is a topological domain, extracellular.

It belongs to the ZIP transporter (TC 2.A.5) family.

The protein localises to the cell membrane. It is found in the apical cell membrane. The catalysed reaction is Zn(2+)(in) = Zn(2+)(out). Transporter for the divalent cation Zn(2+). Mediates the influx of Zn(2+) into cells from extracellular space. This chain is Zinc transporter ZIP3 (slc39a3), found in Xenopus tropicalis (Western clawed frog).